The following is a 555-amino-acid chain: Natural resistance-associated macrophage protein 1 (555 aa).

Residues 1–63 (MSGSGPAMAS…STPGFSFRKL (63 aa)) are Cytoplasmic-facing. Residues 64-81 (WAFTGPGFLMSIAYLDPG) traverse the membrane as a helical segment. The Extracellular segment spans residues 82–90 (NVESDLQCG). The helical transmembrane segment at 91 to 110 (AVAGFKLLWVLLWATVLGLL) threads the bilayer. Over 111–147 (CQRLAIRLGVVTGKDLAEICYLYYPRVPRVLLWLMME) the chain is Cytoplasmic. Residues 148 to 168 (IAIIGSDMQEVIGTAIAFSLL) form a helical membrane-spanning segment. Topologically, residues 169–172 (SAGR) are extracellular. A helical transmembrane segment spans residues 173–192 (IPLWGGVLITITDTLFFLFL). The Cytoplasmic segment spans residues 193-201 (DKYGLRKLE). A helical membrane pass occupies residues 202–222 (AFFGFLITIMALTFGYEYVMV). At 223–245 (RPAQTEVLKGIFLPYCPGCGREE) the chain is on the extracellular side. Residues 246-264 (LLQAVGIVGAIIMPHNIFL) traverse the membrane as a helical segment. At 265–292 (HSSLVKTRAIDRSKKEEVKEANMYFLTE) the chain is on the cytoplasmic side. A helical membrane pass occupies residues 293–312 (SCLALFVSFLINLFVMAVFG). The Extracellular segment spans residues 313 to 354 (EAFYHQRNEDVHNKCVNSSVSRYASIFPINNETVSVDIYQGG). N-linked (GlcNAc...) asparagine glycosylation is found at Asn-329 and Asn-343. The helical transmembrane segment at 355 to 374 (VILGCYFGAAALYIWAVGIL) threads the bilayer. Over 375–405 (AAGQSSTMTGTYAGQFVMEGFLQLRWSRFTR) the chain is Cytoplasmic. A helical transmembrane segment spans residues 406–423 (VLFTRSLAILPTLFVAAF). The Extracellular segment spans residues 424–434 (RDVSQLTGMND). The helical transmembrane segment at 435 to 455 (LLNVLQSILLPFAVLPVLTFT) threads the bilayer. The Cytoplasmic portion of the chain corresponds to 456-471 (SLRPLMHDFANGLLGQ). Residues 472–493 (VLMSLITGLVCAINVYFVVDFL) traverse the membrane as a helical segment. The Extracellular segment spans residues 494–501 (PTLRGLGY). The chain crosses the membrane as a helical span at residues 502 to 521 (LIPLGLLLVAYVAFVTYLLW). Residues 522–555 (TCSIAHGARFLARGRYNRFSFDVTADVPGLAGPH) are Cytoplasmic-facing.

Belongs to the NRAMP family. Macrophages; spleen and thymus and at lower level in liver and lung.

The protein resides in the late endosome membrane. The protein localises to the lysosome membrane. The enzyme catalyses Zn(2+)(in) + H(+)(out) = Zn(2+)(out) + H(+)(in). It carries out the reaction Fe(2+)(in) + H(+)(out) = Fe(2+)(out) + H(+)(in). It catalyses the reaction Mn(2+)(in) + H(+)(out) = Mn(2+)(out) + H(+)(in). Macrophage-specific antiporter that fluxes metal ions in either direction against a proton gradient. Localized to late endosomal lysosomal membranes, delivers bivalent cations from the cytosol into these acidic compartments where they may directly affect antimicrobial activity. Involved in iron metabolism and host natural resistance to infection with intracellular parasites. Pathogen resistance involves sequestration of Fe(2+) and Mn(2+), cofactors of both prokaryotic and eukaryotic catalases and superoxide dismutases, not only to protect the macrophage against its own generation of reactive oxygen species, but to deny the cations to the pathogen for synthesis of its protective enzymes. This chain is Natural resistance-associated macrophage protein 1 (SLC11A1), found in Gallus gallus (Chicken).